The sequence spans 274 residues: Cell division protein FtsQ (274 aa).

A disordered region spans residues 1-24; sequence MRDLHAKKQRVPHNRVKKPPKERK. Over 1-33 the chain is Cytoplasmic; that stretch reads MRDLHAKKQRVPHNRVKKPPKERKPINWGPILK. The segment covering 7-21 has biased composition (basic residues); it reads KKQRVPHNRVKKPPK. A helical transmembrane segment spans residues 34–56; that stretch reads FASRGFGGAALCAGLGFGGWQLY. The Periplasmic segment spans residues 57-274; that stretch reads NLVSRTTLLR…YADKIIVKKV (218 aa). One can recognise a POTRA domain in the interval 65–133; the sequence is LRLEAIEVSP…HTLSITVSER (69 aa).

This sequence belongs to the FtsQ/DivIB family. FtsQ subfamily.

It localises to the cell inner membrane. Its function is as follows. Essential cell division protein. The chain is Cell division protein FtsQ from Geobacter sp. (strain M21).